The chain runs to 560 residues: Chaperonin GroEL 2 (560 aa).

ATP is bound by residues 29–32 (TLGP), 86–90 (DGTTT), G413, 478–480 (NAA), and D494.

It belongs to the chaperonin (HSP60) family. As to quaternary structure, forms a cylinder of 14 subunits composed of two heptameric rings stacked back-to-back. Interacts with the co-chaperonin GroES.

Its subcellular location is the cytoplasm. It catalyses the reaction ATP + H2O + a folded polypeptide = ADP + phosphate + an unfolded polypeptide.. Together with its co-chaperonin GroES, plays an essential role in assisting protein folding. The GroEL-GroES system forms a nano-cage that allows encapsulation of the non-native substrate proteins and provides a physical environment optimized to promote and accelerate protein folding. The protein is Chaperonin GroEL 2 of Trichormus variabilis (strain ATCC 29413 / PCC 7937) (Anabaena variabilis).